Reading from the N-terminus, the 248-residue chain is UPF0736 protein ABC2536 (248 aa).

This sequence belongs to the UPF0736 family.

The chain is UPF0736 protein ABC2536 from Shouchella clausii (strain KSM-K16) (Alkalihalobacillus clausii).